The primary structure comprises 120 residues: Aspartate 1-decarboxylase (120 aa).

Residue Ser-25 is the Schiff-base intermediate with substrate; via pyruvic acid of the active site. Ser-25 carries the pyruvic acid (Ser) modification. Thr-57 serves as a coordination point for substrate. Catalysis depends on Tyr-58, which acts as the Proton donor. 73-75 (GAA) is a binding site for substrate.

It belongs to the PanD family. As to quaternary structure, heterooctamer of four alpha and four beta subunits. It depends on pyruvate as a cofactor. In terms of processing, is synthesized initially as an inactive proenzyme, which is activated by self-cleavage at a specific serine bond to produce a beta-subunit with a hydroxyl group at its C-terminus and an alpha-subunit with a pyruvoyl group at its N-terminus.

Its subcellular location is the cytoplasm. It carries out the reaction L-aspartate + H(+) = beta-alanine + CO2. It participates in cofactor biosynthesis; (R)-pantothenate biosynthesis; beta-alanine from L-aspartate: step 1/1. Functionally, catalyzes the pyruvoyl-dependent decarboxylation of aspartate to produce beta-alanine. The sequence is that of Aspartate 1-decarboxylase from Cupriavidus necator (strain ATCC 17699 / DSM 428 / KCTC 22496 / NCIMB 10442 / H16 / Stanier 337) (Ralstonia eutropha).